Reading from the N-terminus, the 234-residue chain is LRP chaperone MESD (234 aa).

The N-terminal stretch at 1–33 (MAASRWARKAVVLLCASDLLLLLLLLPPPGSCA) is a signal peptide. The interval 1 to 164 (MAASRWARKA…DRAIFMLRDG (164 aa)) is chaperone domain. 2 disordered regions span residues 31-95 (SCAA…DFSK) and 187-234 (GQVY…REDL). Residues 54-70 (DIRDYNDADMARLLEQW) are compositionally biased toward basic and acidic residues. The segment covering 71–80 (EKDDDIEEGD) has biased composition (acidic residues). Positions 165–204 (SYAWEIKDFLVGQDRCADVTLEGQVYPGKGGGSKEKNKTK) are escort domain. Residues 196–234 (GSKEKNKTKQDKGKKKKEGDLKSRSSKEENRAGNKREDL) are compositionally biased toward basic and acidic residues. Residue Asn201 is glycosylated (N-linked (GlcNAc...) asparagine). The Prevents secretion from ER signature appears at 231-234 (REDL).

It belongs to the MESD family. As to quaternary structure, monomer. Interacts with LRP5; the interaction prevents LRP5 from forming aggregates and chaperones LRP6 to the plasma membrane. Interacts with LRP6; the interaction prevents LRP6 from forming aggregates and chaperones LRP6 to the plasma membrane. Interacts with LRP4; the interaction promotes glycosylation of LRP4 and its cell-surface expression.

It is found in the endoplasmic reticulum. Chaperone specifically assisting the folding of beta-propeller/EGF modules within the family of low-density lipoprotein receptors (LDLRs). Acts as a modulator of the Wnt pathway through chaperoning the coreceptors of the canonical Wnt pathway, LRP5 and LRP6, to the plasma membrane. Essential for specification of embryonic polarity and mesoderm induction. Plays an essential role in neuromuscular junction (NMJ) formation by promoting cell-surface expression of LRP4. May regulate phagocytosis of apoptotic retinal pigment epithelium (RPE) cells. In Homo sapiens (Human), this protein is LRP chaperone MESD.